The following is a 156-amino-acid chain: Small ribosomal subunit protein uS7 (156 aa).

The protein belongs to the universal ribosomal protein uS7 family. As to quaternary structure, part of the 30S ribosomal subunit. Contacts proteins S9 and S11.

In terms of biological role, one of the primary rRNA binding proteins, it binds directly to 16S rRNA where it nucleates assembly of the head domain of the 30S subunit. Is located at the subunit interface close to the decoding center, probably blocks exit of the E-site tRNA. The chain is Small ribosomal subunit protein uS7 from Streptomyces avermitilis (strain ATCC 31267 / DSM 46492 / JCM 5070 / NBRC 14893 / NCIMB 12804 / NRRL 8165 / MA-4680).